Reading from the N-terminus, the 359-residue chain is Peptide chain release factor 1 (359 aa).

Gln233 carries the N5-methylglutamine modification.

Belongs to the prokaryotic/mitochondrial release factor family. Methylated by PrmC. Methylation increases the termination efficiency of RF1.

The protein resides in the cytoplasm. Peptide chain release factor 1 directs the termination of translation in response to the peptide chain termination codons UAG and UAA. This is Peptide chain release factor 1 from Orientia tsutsugamushi (strain Boryong) (Rickettsia tsutsugamushi).